Reading from the N-terminus, the 317-residue chain is Aspartate carbamoyltransferase catalytic subunit (317 aa).

Carbamoyl phosphate is bound by residues Arg64 and Thr65. L-aspartate is bound at residue Lys92. Arg114, His144, and Gln147 together coordinate carbamoyl phosphate. L-aspartate-binding residues include Arg177 and Arg232. Carbamoyl phosphate is bound by residues Gly273 and Pro274.

It belongs to the aspartate/ornithine carbamoyltransferase superfamily. ATCase family. Heterododecamer (2C3:3R2) of six catalytic PyrB chains organized as two trimers (C3), and six regulatory PyrI chains organized as three dimers (R2).

The catalysed reaction is carbamoyl phosphate + L-aspartate = N-carbamoyl-L-aspartate + phosphate + H(+). It functions in the pathway pyrimidine metabolism; UMP biosynthesis via de novo pathway; (S)-dihydroorotate from bicarbonate: step 2/3. Functionally, catalyzes the condensation of carbamoyl phosphate and aspartate to form carbamoyl aspartate and inorganic phosphate, the committed step in the de novo pyrimidine nucleotide biosynthesis pathway. This chain is Aspartate carbamoyltransferase catalytic subunit, found in Thiobacillus denitrificans (strain ATCC 25259 / T1).